Consider the following 134-residue polypeptide: SNAPIN protein homolog (134 aa).

Residues 50 to 124 (QLQAELRGQL…EKEQRRRQAL (75 aa)) are a coiled coil.

This sequence belongs to the SNAPIN family. In terms of assembly, component of the biogenesis of lysosome-related organelles complex-1 (BLOC-1) composed of Blos1, Blos2, Blos3, Blos4, Dysb, Muted, Pldn and Snapin. Interacts with Blos2 and Dysb.

The protein localises to the membrane. It is found in the cytoplasm. Its subcellular location is the cytosol. Functionally, component of the biogenesis of lysosome-related organelles complex-1 (BLOC-1) involved in pigment granule biogenesis. May participate in the coupling of lysosomes to microtubule plus-end-directed kinesin motor. This is SNAPIN protein homolog from Drosophila melanogaster (Fruit fly).